Consider the following 168-residue polypeptide: Outer-membrane lipoprotein YfiB (168 aa).

The N-terminal stretch at 1-25 (MLPQRLHPSRLLALALFSLVLGLAG) is a signal peptide. C26 carries the N-palmitoyl cysteine lipid modification. C26 carries S-diacylglycerol cysteine lipidation. One can recognise an OmpA-like domain in the interval 53–168 (EGWEFGMSSK…RRVAIIVPAE (116 aa)).

This sequence belongs to the outer membrane OOP (TC 1.B.6) superfamily. Homodimer. Interacts with YfiR. The YfiB-YfiR complex is a 2:2 heterotetramer.

It is found in the cell outer membrane. Both lipid anchor in the outer membrane and peptidoglycan binding are required for full activity. Once activated by certain cell stress, the dimeric YfiB transforms from a compact conformation to a stretched conformation, allowing the periplasmic domain of the membrane-anchored YfiB to penetrate the cell wall and sequester the YfiR dimer. GMP enhances the binding affinity between YfiB and YfiR. Its function is as follows. Activates the diguanylate cyclase TpbB/YfiN by sequestering YfiR at the outer membrane, which counteracts the YfiR-mediated repression of TpbB/YfiN at the inner membrane and leads to increased c-di-GMP production. May act as a sensor of envelope stress. Functionally, part of the YfiB-TpbB-YfiR (or yfiBNR) system, encoding a tripartite signaling module that modulates intracellular c-di-GMP levels. The system is a key regulator of the small colony variant (SCV) phenotype, and plays an important role in biofilm formation and in vivo persistence. The c-di-GMP produced by TpbB/YfiN stimulates the production of the Pel and Psl exopolysaccharides, which promotes surface attachment, generates an SCV phenotype and confers resistance against phagocytosis. This chain is Outer-membrane lipoprotein YfiB, found in Pseudomonas aeruginosa (strain ATCC 15692 / DSM 22644 / CIP 104116 / JCM 14847 / LMG 12228 / 1C / PRS 101 / PAO1).